Reading from the N-terminus, the 259-residue chain is Cobalt-precorrin-4 C(11)-methyltransferase (259 aa).

Belongs to the precorrin methyltransferase family.

It carries out the reaction Co-precorrin-4 + S-adenosyl-L-methionine = Co-precorrin-5A + S-adenosyl-L-homocysteine + H(+). The protein operates within cofactor biosynthesis; adenosylcobalamin biosynthesis; cob(II)yrinate a,c-diamide from sirohydrochlorin (anaerobic route): step 4/10. Its function is as follows. Catalyzes the methylation of C-11 in cobalt-precorrin-4 to form cobalt-precorrin-5A. This Methanocaldococcus jannaschii (strain ATCC 43067 / DSM 2661 / JAL-1 / JCM 10045 / NBRC 100440) (Methanococcus jannaschii) protein is Cobalt-precorrin-4 C(11)-methyltransferase (cbiF).